Consider the following 254-residue polypeptide: Urease accessory protein UreF (254 aa).

Residues 1–11 (MDKGKSVKSTE) show a composition bias toward basic and acidic residues. The tract at residues 1–25 (MDKGKSVKSTEKSVGIPPKTPKTDN) is disordered.

It belongs to the UreF family. UreH, UreF and UreG form a complex that acts as a GTP-hydrolysis-dependent molecular chaperone, activating the urease apoprotein by helping to assemble the nickel containing metallocenter of UreC. The UreE protein probably delivers the nickel.

The protein localises to the cytoplasm. Its function is as follows. Required for maturation of urease via the functional incorporation of the urease nickel metallocenter. In Helicobacter pylori (strain P12), this protein is Urease accessory protein UreF.